The primary structure comprises 669 residues: RNA-binding protein 14 (669 aa).

RRM domains are found at residues 1–73 (MKIF…MSRP) and 79–149 (WKIF…LSTK). Glycyl lysine isopeptide (Lys-Gly) (interchain with G-Cter in SUMO2) cross-links involve residues lysine 126, lysine 135, lysine 138, lysine 149, and lysine 153. 2 disordered regions span residues 147-175 (STKG…DTAF) and 193-232 (NSTG…PLTA). A Phosphoserine modification is found at serine 161. Lysine 164 carries the N6-acetyllysine; alternate modification. Lysine 164 participates in a covalent cross-link: Glycyl lysine isopeptide (Lys-Gly) (interchain with G-Cter in SUMO2); alternate. A Phosphothreonine modification is found at threonine 206. Residues serine 220, serine 242, serine 244, serine 256, serine 272, and serine 280 each carry the phosphoserine modification. The tract at residues 284-303 (PYRGQLASPSSQSAAASSLG) is disordered. The span at 287 to 303 (GQLASPSSQSAAASSLG) shows a compositional bias: low complexity. The segment at 307–354 (GAQPSASALSSYGGQAAAASSLNSYGAQGSSLASYGNQPSSYGAQAAS) is TRBP-interacting domain; interaction with STIL. 4 positions are modified to phosphoserine: serine 520, serine 523, serine 527, and serine 562. The segment at 566–590 (VANANSTPPPYERTRLSPPRASYDD) is disordered. At threonine 572 the chain carries Phosphothreonine. A Phosphoserine modification is found at serine 582. Lysine 600 is covalently cross-linked (Glycyl lysine isopeptide (Lys-Gly) (interchain with G-Cter in SUMO2)). Serine 618, serine 620, serine 623, serine 627, serine 643, and serine 649 each carry phosphoserine.

As to quaternary structure, isoform 1: Interacts with NCOA6, CITED1 and XRCC5/KU86. Isoform 1: Interacts with SS18 isoform 1. Isoform 1: Interacts with SS18 isoform 2. Interacts with STIL and interferes with its interaction with CPAP. Interacts with gamma-tubulin. Part of the HDP-RNP complex composed of at least HEXIM1, PRKDC, XRCC5, XRCC6, paraspeckle proteins (SFPQ, NONO, PSPC1, RBM14, and MATR3) and NEAT1 RNA. Interacts with RBPMS; the interaction allows cooperative assembly of RNA-bound stable cell-specific alternative splicing regulatory complexes. In terms of tissue distribution, expressed in all tissues tested, including brain, heart, skeletal muscle, colon, thymus, spleen, kidney, liver, small intestine, placenta, lung and peripheral blood lymphocytes.

The protein localises to the nucleus. It localises to the nucleolus. It is found in the cytoplasm. Isoform 1 may function as a nuclear receptor coactivator, enhancing transcription through other coactivators such as NCOA6 and CITED1. Isoform 2, functions as a transcriptional repressor, modulating transcriptional activities of coactivators including isoform 1, NCOA6 and CITED1. Regulates centriole biogenesis by suppressing the formation of aberrant centriolar protein complexes in the cytoplasm and thus preserving mitotic spindle integrity. Prevents the formation of the STIL-CPAP complex (which can induce the formation of aberrant centriolar protein complexes) by interfering with the interaction of STIL with CPAP. Plays a role in the regulation of DNA virus-mediated innate immune response by assembling into the HDP-RNP complex, a complex that serves as a platform for IRF3 phosphorylation and subsequent innate immune response activation through the cGAS-STING pathway. Also involved in the regulation of pre-mRNA alternative splicing. The sequence is that of RNA-binding protein 14 (RBM14) from Homo sapiens (Human).